The sequence spans 471 residues: Ribosomal protein uS12 methylthiotransferase RimO (471 aa).

The MTTase N-terminal domain occupies 19–134 (PRVGFVSLGC…VMNAVHTHLP (116 aa)). Residues cysteine 28, cysteine 64, cysteine 93, cysteine 169, cysteine 173, and cysteine 176 each coordinate [4Fe-4S] cluster. One can recognise a Radical SAM core domain in the interval 155-396 (LTPRHYAYLK…MAVAEEVSTA (242 aa)). In terms of domain architecture, TRAM spans 399-471 (QKRVGQTMQV…QGHDLVGQPV (73 aa)).

The protein belongs to the methylthiotransferase family. RimO subfamily. [4Fe-4S] cluster serves as cofactor.

Its subcellular location is the cytoplasm. It catalyses the reaction L-aspartate(89)-[ribosomal protein uS12]-hydrogen + (sulfur carrier)-SH + AH2 + 2 S-adenosyl-L-methionine = 3-methylsulfanyl-L-aspartate(89)-[ribosomal protein uS12]-hydrogen + (sulfur carrier)-H + 5'-deoxyadenosine + L-methionine + A + S-adenosyl-L-homocysteine + 2 H(+). Its function is as follows. Catalyzes the methylthiolation of an aspartic acid residue of ribosomal protein uS12. The polypeptide is Ribosomal protein uS12 methylthiotransferase RimO (Delftia acidovorans (strain DSM 14801 / SPH-1)).